The primary structure comprises 373 residues: Muscleblind-like protein 2 (373 aa).

4 consecutive C3H1-type zinc fingers follow at residues 13-41 (WLTL…HPPK), 47-73 (NGRV…HPPT), 176-204 (TDKL…HPAD), and 212-238 (DNTV…HPPA).

This sequence belongs to the muscleblind family. Interacts with ITGA3.

It localises to the nucleus. Its subcellular location is the cytoplasm. Functionally, mediates pre-mRNA alternative splicing regulation. Acts either as activator or repressor of splicing on specific pre-mRNA targets. Inhibits cardiac troponin-T (TNNT2) pre-mRNA exon inclusion but induces insulin receptor (IR) pre-mRNA exon inclusion in muscle. Antagonizes the alternative splicing activity pattern of CELF proteins. RNA-binding protein that binds to 5'ACACCC-3' core sequence, termed zipcode, within the 3'UTR of ITGA3. Binds to CUG triplet repeat expansion in myotonic dystrophy muscle cells by sequestering the target RNAs. Together with RNA binding proteins RBPMS and RBFOX2, activates vascular smooth muscle cells alternative splicing events. Regulates NCOR2 alternative splicing. Seems to regulate expression and localization of ITGA3 by transporting it from the nucleus to cytoplasm at adhesion plaques. May play a role in myotonic dystrophy pathophysiology (DM). This chain is Muscleblind-like protein 2 (Mbnl2), found in Mus musculus (Mouse).